Reading from the N-terminus, the 178-residue chain is Interleukin-10 (178 aa).

The N-terminal stretch at 1–18 (MPGSALLCCLLLLTGMRI) is a signal peptide. N-linked (GlcNAc...) asparagine glycosylation occurs at asparagine 29. 2 cysteine pairs are disulfide-bonded: cysteine 30-cysteine 126 and cysteine 80-cysteine 132. The N-linked (GlcNAc...) asparagine glycan is linked to asparagine 134.

This sequence belongs to the IL-10 family. Homodimer. Interacts with IL10RA and IL10RB.

The protein resides in the secreted. Its function is as follows. Major immune regulatory cytokine that acts on many cells of the immune system where it has profound anti-inflammatory functions, limiting excessive tissue disruption caused by inflammation. Mechanistically, IL10 binds to its heterotetrameric receptor comprising IL10RA and IL10RB leading to JAK1 and STAT2-mediated phosphorylation of STAT3. In turn, STAT3 translocates to the nucleus where it drives expression of anti-inflammatory mediators. Targets antigen-presenting cells (APCs) such as macrophages and monocytes and inhibits their release of pro-inflammatory cytokines including granulocyte-macrophage colony-stimulating factor /GM-CSF, granulocyte colony-stimulating factor/G-CSF, IL-1 alpha, IL-1 beta, IL-6, IL-8 and TNF-alpha. Also interferes with antigen presentation by reducing the expression of MHC-class II and co-stimulatory molecules, thereby inhibiting their ability to induce T cell activation. In addition, controls the inflammatory response of macrophages by reprogramming essential metabolic pathways including mTOR signaling. The polypeptide is Interleukin-10 (Il10) (Mus musculus (Mouse)).